Reading from the N-terminus, the 466-residue chain is Adenosylhomocysteinase (466 aa).

Residues Thr57, Asp132, and Glu192 each coordinate substrate. 193 to 195 (TTT) lines the NAD(+) pocket. Substrate is bound by residues Lys222 and Asp226. Residues Asn227, 256 to 261 (GYGDVG), Glu279, Asn314, 335 to 337 (IGH), and Asn380 each bind NAD(+).

This sequence belongs to the adenosylhomocysteinase family. The cofactor is NAD(+).

It localises to the cytoplasm. The catalysed reaction is S-adenosyl-L-homocysteine + H2O = L-homocysteine + adenosine. It participates in amino-acid biosynthesis; L-homocysteine biosynthesis; L-homocysteine from S-adenosyl-L-homocysteine: step 1/1. Functionally, may play a key role in the regulation of the intracellular concentration of adenosylhomocysteine. This is Adenosylhomocysteinase from Brucella melitensis biotype 2 (strain ATCC 23457).